Here is an 83-residue protein sequence, read N- to C-terminus: RNA-binding protein Hfq (83 aa).

The region spanning 11–71 (DTFLNFVRKN…ISTIMPGQPI (61 aa)) is the Sm domain.

The protein belongs to the Hfq family. In terms of assembly, homohexamer.

Functionally, RNA chaperone that binds small regulatory RNA (sRNAs) and mRNAs to facilitate mRNA translational regulation in response to envelope stress, environmental stress and changes in metabolite concentrations. Also binds with high specificity to tRNAs. This is RNA-binding protein Hfq from Methylocella silvestris (strain DSM 15510 / CIP 108128 / LMG 27833 / NCIMB 13906 / BL2).